The following is a 305-amino-acid chain: Fatty acid elongase 1 (305 aa).

Transmembrane regions (helical) follow at residues 24–44, 80–100, 129–149, 158–178, 183–203, 217–237, and 257–277; these read MIANVDVVLYISFLYLGFVFI, VVWNLALSIFSIFGTSTVTPV, FWMGIFALSKIPELVDTIFLV, FLHWYHHVTVLLFSWHTYCVG, IWVAAMNYSVHSVMYLYFALA, YITIIQILQMVVGCYVTIFAL, and IQLVMYASYLYLFSKMFVASY. The HxxHH motif motif lies at 160–164; sequence HWYHH. Residue His-163 is the Nucleophile of the active site. The tract at residues 284–305 is disordered; the sequence is PTVGGPSSTAGVSNGSVEKKVK. Over residues 288-299 the composition is skewed to polar residues; sequence GPSSTAGVSNGS. A glycan (N-linked (GlcNAc...) asparagine) is linked at Asn-297.

The protein belongs to the ELO family.

It is found in the endoplasmic reticulum membrane. It catalyses the reaction an acyl-CoA + malonyl-CoA + H(+) = a 3-oxoacyl-CoA + CO2 + CoA. The protein operates within lipid metabolism; fatty acid biosynthesis. In terms of biological role, involved in the synthesis of fatty acids. Elongates C4 fatty acids to C10. The protein is Fatty acid elongase 1 of Trypanosoma brucei brucei (strain 927/4 GUTat10.1).